A 566-amino-acid polypeptide reads, in one-letter code: Bacillolysin (566 aa).

Positions 1-27 are cleaved as a signal peptide; it reads MKKKSLALVLATGMAVTTFGGTGSAFA. Residues 28–249 constitute a propeptide, activation peptide; the sequence is DSKNVLSTKK…KQDAKAVVKP (222 aa). Ca(2+)-binding residues include Asp-307, Asp-309, Val-311, and Asp-388. Residue His-392 coordinates Zn(2+). The active site involves Glu-393. Residues His-396 and Glu-416 each coordinate Zn(2+). Residues Glu-427, Asn-433, Asp-435, Glu-437, Glu-440, Tyr-443, Thr-444, Lys-447, and Asp-450 each contribute to the Ca(2+) site. Residue His-481 is the Proton donor of the active site.

This sequence belongs to the peptidase M4 family. Ca(2+) is required as a cofactor. Requires Zn(2+) as cofactor.

It is found in the secreted. It carries out the reaction Similar, but not identical, to that of thermolysin.. In terms of biological role, extracellular zinc metalloprotease. In Bacillus cereus, this protein is Bacillolysin (npr).